The chain runs to 442 residues: GPI mannosyltransferase 1 (442 aa).

A run of 8 helical transmembrane segments spans residues 22 to 42 (INLTKSIFIVGLVIRLVLIVF), 95 to 115 (ILIHPAFGKLLFVICDMIIAY), 177 to 197 (LASIFYGLSVHFKIYPIIYSI), 242 to 262 (AFTFISLTFIMYLIYGYIFLF), 307 to 327 (MIVALASFLPQVILLLAITLV), 336 to 356 (LLLETITFVAFNKVCTVQYFI), 361 to 381 (ILPLVIPSSSLGLVQYIILFA), and 408 to 428 (IWVAGLLFFIANIYILVKLIL).

Belongs to the PIGM family.

It is found in the endoplasmic reticulum membrane. The protein operates within glycolipid biosynthesis; glycosylphosphatidylinositol-anchor biosynthesis. Functionally, mannosyltransferase involved in glycosylphosphatidylinositol-anchor biosynthesis. Transfers the first alpha-1,4-mannose to GlcN-acyl-PI during GPI precursor assembly. This chain is GPI mannosyltransferase 1 (pigm), found in Dictyostelium discoideum (Social amoeba).